The sequence spans 324 residues: Phthalate 4,5-dioxygenase oxygenase reductase subunit (324 aa).

Residues 9–111 form the FAD-binding FR-type domain; that stretch reads DGFTGLKVIA…ATPQNEFELI (103 aa). 115 to 229 lines the NAD(+) pocket; sequence RQFIFVAGGI…PGSIHFESFG (115 aa). Residues 241 to 324 enclose the 2Fe-2S ferredoxin-type domain; that stretch reads FSVTLGRSGI…ARNDVLVLDL (84 aa). The [2Fe-2S] cluster site is built by Cys275, Cys280, Cys283, and Cys311.

It belongs to the PDR/VanB family. In terms of assembly, this dioxygenase system consists of two proteins: phthalate oxygenase and phthalate oxygenase reductase. FMN serves as cofactor.

It catalyses the reaction phthalate + NADH + O2 + H(+) = cis-4,5-dihydroxycyclohexa-2,6-diene-1,2-dicarboxylate + NAD(+). Its pathway is xenobiotic degradation; phthalate degradation; 3,4-dihydroxybenzoate from phthalate: step 1/3. This is Phthalate 4,5-dioxygenase oxygenase reductase subunit (pht2) from Pseudomonas putida (Arthrobacter siderocapsulatus).